Reading from the N-terminus, the 580-residue chain is Tyrosyl-DNA phosphodiesterase 1 (580 aa).

The segment at 65-117 (ATNKEQEAHSSSSKPAVTAPVASGSSSSGSLDTNPSGSSASGPAASQDTSNLA) is disordered. A compositionally biased stretch (low complexity) spans 87-110 (SGSSSSGSLDTNPSGSSASGPAAS). Histidine 248 (nucleophile) is an active-site residue. Lysine 250 contacts substrate. Positions 387–390 (SIGS) are interaction with DNA. The active-site Proton donor/acceptor is histidine 479. Lysine 481 lines the substrate pocket.

This sequence belongs to the tyrosyl-DNA phosphodiesterase family. Expressed in the body and at higher levels in the head. Expressed in the delaminating neuroblasts and a few ganglion mother cells in stage 11-14 embryonic central nervous system. Weak expression is seen in gonads at stage 16. Expressed in the brain; expression is regulated by DIP2.

The protein resides in the nucleus. The protein localises to the cytoplasm. Its function is as follows. DNA repair enzyme that can remove a variety of covalent adducts from DNA through hydrolysis of a 3'-phosphodiester bond, giving rise to DNA with a free 3' phosphate. Catalyzes the hydrolysis of dead-end complexes between DNA and the topoisomerase I active site tyrosine residue. Hydrolyzes 3'-phosphoglycolates on protruding 3' ends on DNA double-strand breaks due to DNA damage by radiation and free radicals. Acts on blunt-ended double-strand DNA breaks and on single-stranded DNA. May have low 3'exonuclease activity and may be able to remove a single nucleoside from the 3'end of DNA and RNA molecules with 3'hydroxyl groups. Has no exonuclease activity towards DNA or RNA with a 3'phosphate. Required for normal polarization of epidermal cells, correct subcellular location of the Crb complex to the apical lateral membrane, and for normal neuronal development during embryonic development. Contributes to maintenance of epithelial cells in response to topoisomerase-1-mediated and oxidative DNA damage. Required for precise axonal bifurcation in mushroom body neurons. Required for maintenance of normal neuronal function. In Drosophila melanogaster (Fruit fly), this protein is Tyrosyl-DNA phosphodiesterase 1.